Reading from the N-terminus, the 420-residue chain is UPF0053 protein HI_0107 (420 aa).

Residues 2–190 (DSIPLSTLFI…GEATPNEQHP (189 aa)) enclose the CNNM transmembrane domain. Transmembrane regions (helical) follow at residues 3-23 (SIPLSTLFIILIICLVLSAYF), 65-85 (FILIFNNLVNISASAIATVIG), 92-112 (AGVAIATGLLTFVMLVFSEIF), and 126-146 (FFSSHILTSLLKIFYPLVWLM). CBS domains are found at residues 208 to 268 (MVPR…KNEF) and 273 to 333 (LIRA…FTTS).

Belongs to the UPF0053 family.

The protein resides in the cell membrane. This is UPF0053 protein HI_0107 from Haemophilus influenzae (strain ATCC 51907 / DSM 11121 / KW20 / Rd).